Reading from the N-terminus, the 647-residue chain is DNA mismatch repair protein MutL (647 aa).

Belongs to the DNA mismatch repair MutL/HexB family.

In terms of biological role, this protein is involved in the repair of mismatches in DNA. It is required for dam-dependent methyl-directed DNA mismatch repair. May act as a 'molecular matchmaker', a protein that promotes the formation of a stable complex between two or more DNA-binding proteins in an ATP-dependent manner without itself being part of a final effector complex. In Bacillus thuringiensis subsp. konkukian (strain 97-27), this protein is DNA mismatch repair protein MutL.